An 869-amino-acid polypeptide reads, in one-letter code: DNA mismatch repair protein MutS (869 aa).

619–626 (GPNMAGKS) lines the ATP pocket.

Belongs to the DNA mismatch repair MutS family.

In terms of biological role, this protein is involved in the repair of mismatches in DNA. It is possible that it carries out the mismatch recognition step. This protein has a weak ATPase activity. The protein is DNA mismatch repair protein MutS of Caldanaerobacter subterraneus subsp. tengcongensis (strain DSM 15242 / JCM 11007 / NBRC 100824 / MB4) (Thermoanaerobacter tengcongensis).